Reading from the N-terminus, the 209-residue chain is Putative NAD(P)H nitroreductase YdgI (209 aa).

FMN is bound by residues 14-16 (RRS), 72-74 (QTQ), 161-162 (GG), and R199.

Belongs to the nitroreductase family. It depends on FMN as a cofactor.

This is Putative NAD(P)H nitroreductase YdgI (ydgI) from Bacillus subtilis (strain 168).